The sequence spans 189 residues: Interferon alpha-17 (189 aa).

An N-terminal signal peptide occupies residues 1 to 23; it reads MALSFSLLMAVLVLSYKSICSLG. 2 disulfide bridges follow: cysteine 24-cysteine 122 and cysteine 52-cysteine 162.

Belongs to the alpha/beta interferon family.

It is found in the secreted. In terms of biological role, produced by macrophages, IFN-alpha have antiviral activities. Interferon stimulates the production of two enzymes: a protein kinase and an oligoadenylate synthetase. The chain is Interferon alpha-17 (IFNA17) from Homo sapiens (Human).